The following is a 261-amino-acid chain: Kallikrein 1-related peptidase b21 (261 aa).

The signal sequence occupies residues 1–17 (MRFLILFLALSLGEIDA). A propeptide spans 18–24 (APPVQSR) (activation peptide). The Peptidase S1 domain occupies 25–258 (IVGGFNCEKN…FTSWIKDTMA (234 aa)). Cystine bridges form between C31-C173, C50-C66, C152-C219, C184-C198, and C209-C234. The active-site Charge relay system is the H65. N-linked (GlcNAc...) asparagine glycosylation occurs at N102. D120 acts as the Charge relay system in catalysis. The Charge relay system role is filled by S213.

It belongs to the peptidase S1 family. Kallikrein subfamily. As to expression, expressed in testis and submaxillary gland. In the testis, expression localized specifically to Leydig cells in the interstitial tissues.

It carries out the reaction Preferential cleavage of Arg-|-Xaa bonds in small molecule substrates. Highly selective action to release kallidin (lysyl-bradykinin) from kininogen involves hydrolysis of Met-|-Xaa or Leu-|-Xaa.. Inhibited by protease inhibitors diisopropylfluorophosphate, leupeptin, antipain, benzamidine, phenylmethylsulfonyl fluoride and soybean trypsin inhibitor. Its function is as follows. Glandular kallikreins cleave Met-Lys and Arg-Ser bonds in kininogen to release Lys-bradykinin. Displays trypsin-like substrate specificity and shows activity towards casein, gelatin, fibronectin and IGFBP3. This is Kallikrein 1-related peptidase b21 (Klk1b21) from Mus musculus (Mouse).